A 764-amino-acid chain; its full sequence is Phosphoribosylformylglycinamidine synthase subunit PurL (764 aa).

The active site involves histidine 57. Residues tyrosine 60 and lysine 104 each coordinate ATP. Glutamate 106 is a binding site for Mg(2+). Residues 107-110 and arginine 129 contribute to the substrate site; that span reads SHNH. The active-site Proton acceptor is the histidine 108. Aspartate 130 is a Mg(2+) binding site. Position 258 (glutamine 258) interacts with substrate. A Mg(2+)-binding site is contributed by aspartate 286. 330–332 serves as a coordination point for substrate; sequence ESQ. 2 residues coordinate ATP: asparagine 518 and glycine 555. Asparagine 556 provides a ligand contact to Mg(2+). Serine 558 contributes to the substrate binding site.

The protein belongs to the FGAMS family. In terms of assembly, monomer. Part of the FGAM synthase complex composed of 1 PurL, 1 PurQ and 2 PurS subunits.

The protein resides in the cytoplasm. The catalysed reaction is N(2)-formyl-N(1)-(5-phospho-beta-D-ribosyl)glycinamide + L-glutamine + ATP + H2O = 2-formamido-N(1)-(5-O-phospho-beta-D-ribosyl)acetamidine + L-glutamate + ADP + phosphate + H(+). The protein operates within purine metabolism; IMP biosynthesis via de novo pathway; 5-amino-1-(5-phospho-D-ribosyl)imidazole from N(2)-formyl-N(1)-(5-phospho-D-ribosyl)glycinamide: step 1/2. Its function is as follows. Part of the phosphoribosylformylglycinamidine synthase complex involved in the purines biosynthetic pathway. Catalyzes the ATP-dependent conversion of formylglycinamide ribonucleotide (FGAR) and glutamine to yield formylglycinamidine ribonucleotide (FGAM) and glutamate. The FGAM synthase complex is composed of three subunits. PurQ produces an ammonia molecule by converting glutamine to glutamate. PurL transfers the ammonia molecule to FGAR to form FGAM in an ATP-dependent manner. PurS interacts with PurQ and PurL and is thought to assist in the transfer of the ammonia molecule from PurQ to PurL. The sequence is that of Phosphoribosylformylglycinamidine synthase subunit PurL from Nocardia farcinica (strain IFM 10152).